Reading from the N-terminus, the 360-residue chain is Phospho-N-acetylmuramoyl-pentapeptide-transferase (360 aa).

10 consecutive transmembrane segments (helical) span residues 21 to 41 (YITV…LWIG), 73 to 93 (TMGG…WANL), 94 to 114 (ANPY…IGFV), 132 to 152 (WKYF…YAIG), 168 to 188 (IMPQ…VGTS), 199 to 219 (GLAI…AWAT), 235 to 255 (FSAE…GFLW), 263 to 283 (VFMG…VAVL), 288 to 308 (FLLV…ILQV), and 338 to 358 (VIVR…VTLK).

It belongs to the glycosyltransferase 4 family. MraY subfamily. It depends on Mg(2+) as a cofactor.

It is found in the cell inner membrane. It carries out the reaction UDP-N-acetyl-alpha-D-muramoyl-L-alanyl-gamma-D-glutamyl-meso-2,6-diaminopimeloyl-D-alanyl-D-alanine + di-trans,octa-cis-undecaprenyl phosphate = di-trans,octa-cis-undecaprenyl diphospho-N-acetyl-alpha-D-muramoyl-L-alanyl-D-glutamyl-meso-2,6-diaminopimeloyl-D-alanyl-D-alanine + UMP. Its pathway is cell wall biogenesis; peptidoglycan biosynthesis. Functionally, catalyzes the initial step of the lipid cycle reactions in the biosynthesis of the cell wall peptidoglycan: transfers peptidoglycan precursor phospho-MurNAc-pentapeptide from UDP-MurNAc-pentapeptide onto the lipid carrier undecaprenyl phosphate, yielding undecaprenyl-pyrophosphoryl-MurNAc-pentapeptide, known as lipid I. This is Phospho-N-acetylmuramoyl-pentapeptide-transferase from Pasteurella multocida (strain Pm70).